A 963-amino-acid chain; its full sequence is Putative RNA Helicase B962L (963 aa).

The 187-residue stretch at 43 to 229 folds into the Helicase ATP-binding domain; it reads IPTSLADRVL…FGIGKENIIL (187 aa). 56-63 is a binding site for ATP; the sequence is SRTGSGKS. The DEAH box motif lies at 167–170; that stretch reads DEAH. In terms of domain architecture, Helicase C-terminal spans 253–459; that stretch reads ACETALTIHK…TIKKNKEGVF (207 aa). The helical transmembrane segment at 521–541 threads the bilayer; the sequence is GYFWQAAISDIAIILAVVSVV.

This sequence belongs to the DEAD box helicase family. DEAH subfamily.

It is found in the host membrane. The protein resides in the virion. The catalysed reaction is ATP + H2O = ADP + phosphate + H(+). This is Putative RNA Helicase B962L from African swine fever virus (isolate Tick/Malawi/Lil 20-1/1983) (ASFV).